Consider the following 81-residue polypeptide: NAD(P)H-quinone oxidoreductase subunit O (81 aa).

This sequence belongs to the complex I NdhO subunit family. In terms of assembly, NDH-1 can be composed of about 15 different subunits; different subcomplexes with different compositions have been identified which probably have different functions.

It localises to the cellular thylakoid membrane. The catalysed reaction is a plastoquinone + NADH + (n+1) H(+)(in) = a plastoquinol + NAD(+) + n H(+)(out). It catalyses the reaction a plastoquinone + NADPH + (n+1) H(+)(in) = a plastoquinol + NADP(+) + n H(+)(out). Its function is as follows. NDH-1 shuttles electrons from an unknown electron donor, via FMN and iron-sulfur (Fe-S) centers, to quinones in the respiratory and/or the photosynthetic chain. The immediate electron acceptor for the enzyme in this species is believed to be plastoquinone. Couples the redox reaction to proton translocation, and thus conserves the redox energy in a proton gradient. Cyanobacterial NDH-1 also plays a role in inorganic carbon-concentration. The sequence is that of NAD(P)H-quinone oxidoreductase subunit O from Prochlorococcus marinus (strain MIT 9303).